A 187-amino-acid chain; its full sequence is MNLQDHFLIAMPHLEDENFQRSVVYICENNEQGSMGLVLTQATDLSIAELCAKMNFMMADEREYSDKLVLLGGPVNLEHGFILHKKTAQEFQHSYKVTDQIYLTTSADIINTFGTAQSPEKYLVTLGCARWEPNQLENEIANNDWLVVPADEDILFDVDISERWFAANQLLGIEHVNFSYQQQMEHS.

This sequence belongs to the UPF0301 (AlgH) family.

The polypeptide is UPF0301 protein HS_0009 (Histophilus somni (strain 129Pt) (Haemophilus somnus)).